Here is a 298-residue protein sequence, read N- to C-terminus: Lipoyl synthase (298 aa).

[4Fe-4S] cluster-binding residues include Cys-40, Cys-45, Cys-51, Cys-67, Cys-71, Cys-74, and Ser-280. Residues 53–269 (AVRKTATFMI…KEIALSKGFS (217 aa)) enclose the Radical SAM core domain.

It belongs to the radical SAM superfamily. Lipoyl synthase family. The cofactor is [4Fe-4S] cluster.

It localises to the cytoplasm. The catalysed reaction is [[Fe-S] cluster scaffold protein carrying a second [4Fe-4S](2+) cluster] + N(6)-octanoyl-L-lysyl-[protein] + 2 oxidized [2Fe-2S]-[ferredoxin] + 2 S-adenosyl-L-methionine + 4 H(+) = [[Fe-S] cluster scaffold protein] + N(6)-[(R)-dihydrolipoyl]-L-lysyl-[protein] + 4 Fe(3+) + 2 hydrogen sulfide + 2 5'-deoxyadenosine + 2 L-methionine + 2 reduced [2Fe-2S]-[ferredoxin]. The protein operates within protein modification; protein lipoylation via endogenous pathway; protein N(6)-(lipoyl)lysine from octanoyl-[acyl-carrier-protein]. Functionally, catalyzes the radical-mediated insertion of two sulfur atoms into the C-6 and C-8 positions of the octanoyl moiety bound to the lipoyl domains of lipoate-dependent enzymes, thereby converting the octanoylated domains into lipoylated derivatives. This is Lipoyl synthase from Bacillus anthracis (strain A0248).